The sequence spans 324 residues: Mitochondrial thiamine pyrophosphate carrier 1 (324 aa).

Solcar repeat units lie at residues 12 to 110 (GNRI…ISSA), 119 to 205 (PQPV…LRSP), and 212 to 307 (PFGT…VLGL). 6 consecutive transmembrane segments (helical) span residues 15–35 (IQVV…VAPL), 79–99 (ITGL…YGGI), 125–145 (FISG…LDLL), 182–202 (TAAI…YEAL), 218–238 (AGAG…LDLV), and 282–299 (GLTV…VTMW).

Belongs to the mitochondrial carrier (TC 2.A.29) family.

It localises to the mitochondrion inner membrane. Mitochondrial transporter that mediates uptake of thiamine pyrophosphate (ThPP) into mitochondria. This chain is Mitochondrial thiamine pyrophosphate carrier 1 (TPC1), found in Ajellomyces capsulatus (strain NAm1 / WU24) (Darling's disease fungus).